Here is a 287-residue protein sequence, read N- to C-terminus: Putative holocytochrome-c1 synthase (287 aa).

Over residues 1–12 (MRGFGSDSSQAS) the composition is skewed to polar residues. Disordered regions lie at residues 1-63 (MRGF…QPSS) and 81-100 (QSQSANSTQQAQPPKLSAPL). 2 stretches are compositionally biased toward low complexity: residues 31–63 (QARAAQSASTSAAPALPQSVQVAPASQPSQPSS) and 81–92 (QSQSANSTQQAQ).

Belongs to the cytochrome c-type heme lyase family.

It is found in the mitochondrion inner membrane. The enzyme catalyses holo-[cytochrome c] = apo-[cytochrome c] + heme b. Probable lyase that catalyzes the covalent linking of the heme group to the cytochrome C apoprotein to produce the mature functional cytochrome. This Chaetomium thermophilum (strain DSM 1495 / CBS 144.50 / IMI 039719) (Thermochaetoides thermophila) protein is Putative holocytochrome-c1 synthase.